The primary structure comprises 101 residues: Urease subunit gamma (101 aa).

This sequence belongs to the urease gamma subunit family. In terms of assembly, heterotrimer of UreA (gamma), UreB (beta) and UreC (alpha) subunits. Three heterotrimers associate to form the active enzyme.

It is found in the cytoplasm. It catalyses the reaction urea + 2 H2O + H(+) = hydrogencarbonate + 2 NH4(+). Its pathway is nitrogen metabolism; urea degradation; CO(2) and NH(3) from urea (urease route): step 1/1. The polypeptide is Urease subunit gamma (Ureaplasma parvum serovar 3 (strain ATCC 27815 / 27 / NCTC 11736)).